The sequence spans 545 residues: MITNYIFVTGGVVSSLGKGIAAASLAAILEARSLKVTIMKLDPYINLDPGTISPKQHGEVFVTEDGAETDLDLGHYERFIRTKMTRHNNFTTGAIYSEVLQKERRGDYLGSTVQVIPHITNAIKERIVIAAQGYDVALVEIGGTVGDIESLPFLEAIRQMVTDVGRSHALYIHLTLLPYLTTAGEVKTKPTQHSVKELLSIGIQPDVLICRSDHEVPDHERSKIALFCNVEKKAVISLKDVDSIYKIPKILQSQGLDQYICDKFNLKCPKANLGQWEQVLYEECHCEGTVSIGMVGKYIELPDAYKSVIEALKHAGLKNRVKVNIQLIDAQELLTVGIEKLAGLNAILIPGGFGHRGIEGMIVAAQYARENRIPYLGICLGMQVALIEFARHVAGMEKANSTEFDPDARYPVIGLITEWQNEDGEIAVRSEKSNLGGTMRVGAQKCHLVKGSLTHQLYEKPIIIERHRHRYEVNNMILPIIEAAGLSVSGRSMDKKLVEIIELPHHPWFVACQFHPEFTSTPRDGHPLFIGFVKSALAHHQDSLK.

The interval 1-266 (MITNYIFVTG…DQYICDKFNL (266 aa)) is amidoligase domain. Serine 14 contacts CTP. Residue serine 14 coordinates UTP. Residues 15 to 20 (SLGKGI) and aspartate 72 contribute to the ATP site. Residues aspartate 72 and glutamate 140 each contribute to the Mg(2+) site. CTP is bound by residues 147 to 149 (DIE), 187 to 192 (KTKPTQ), and lysine 223. Residues 187 to 192 (KTKPTQ) and lysine 223 each bind UTP. 239–241 (KDV) serves as a coordination point for ATP. A Glutamine amidotransferase type-1 domain is found at 291–542 (SIGMVGKYIE…VKSALAHHQD (252 aa)). Glycine 352 provides a ligand contact to L-glutamine. The active-site Nucleophile; for glutamine hydrolysis is cysteine 379. L-glutamine contacts are provided by residues 380–383 (LGMQ), glutamate 403, and arginine 470. Catalysis depends on residues histidine 515 and glutamate 517.

Belongs to the CTP synthase family. In terms of assembly, homotetramer.

It carries out the reaction UTP + L-glutamine + ATP + H2O = CTP + L-glutamate + ADP + phosphate + 2 H(+). It catalyses the reaction L-glutamine + H2O = L-glutamate + NH4(+). The enzyme catalyses UTP + NH4(+) + ATP = CTP + ADP + phosphate + 2 H(+). It participates in pyrimidine metabolism; CTP biosynthesis via de novo pathway; CTP from UDP: step 2/2. With respect to regulation, allosterically activated by GTP, when glutamine is the substrate; GTP has no effect on the reaction when ammonia is the substrate. The allosteric effector GTP functions by stabilizing the protein conformation that binds the tetrahedral intermediate(s) formed during glutamine hydrolysis. Inhibited by the product CTP, via allosteric rather than competitive inhibition. Catalyzes the ATP-dependent amination of UTP to CTP with either L-glutamine or ammonia as the source of nitrogen. Regulates intracellular CTP levels through interactions with the four ribonucleotide triphosphates. This chain is CTP synthase, found in Hamiltonella defensa subsp. Acyrthosiphon pisum (strain 5AT).